The following is a 533-amino-acid chain: T-complex protein 1 subunit delta (533 aa).

Positions 1–26 are disordered; that stretch reads MSAPAAAPAKVLPSRSDFDEKEKEKD. Positions 16-26 are enriched in basic and acidic residues; the sequence is SDFDEKEKEKD.

The protein belongs to the TCP-1 chaperonin family. In terms of assembly, heterooligomeric complex of about 850 to 900 kDa that forms two stacked rings, 12 to 16 nm in diameter.

The protein resides in the cytoplasm. Functionally, molecular chaperone; assists the folding of proteins upon ATP hydrolysis. Known to play a role, in vitro, in the folding of actin and tubulin. The polypeptide is T-complex protein 1 subunit delta (cct4) (Dictyostelium discoideum (Social amoeba)).